Consider the following 490-residue polypeptide: Protein U94 (490 aa).

A PV NS1-Nuc domain is found at 1–210 (MFSIINPSDD…SHFNKKPNVK (210 aa)).

Its subcellular location is the host nucleus. This chain is Protein U94 (U94), found in Human herpesvirus 6A (strain Uganda-1102) (HHV-6 variant A).